Here is a 220-residue protein sequence, read N- to C-terminus: Protein GrpE (220 aa).

Residues 1 to 22 form a disordered region; that stretch reads MSDEKNKFTDASFENCDLKNPS.

The protein belongs to the GrpE family. In terms of assembly, homodimer.

The protein resides in the cytoplasm. Its function is as follows. Participates actively in the response to hyperosmotic and heat shock by preventing the aggregation of stress-denatured proteins, in association with DnaK and GrpE. It is the nucleotide exchange factor for DnaK and may function as a thermosensor. Unfolded proteins bind initially to DnaJ; upon interaction with the DnaJ-bound protein, DnaK hydrolyzes its bound ATP, resulting in the formation of a stable complex. GrpE releases ADP from DnaK; ATP binding to DnaK triggers the release of the substrate protein, thus completing the reaction cycle. Several rounds of ATP-dependent interactions between DnaJ, DnaK and GrpE are required for fully efficient folding. The sequence is that of Protein GrpE from Bartonella henselae (strain ATCC 49882 / DSM 28221 / CCUG 30454 / Houston 1) (Rochalimaea henselae).